Here is a 485-residue protein sequence, read N- to C-terminus: Zinc finger protein 639 (485 aa).

Basic residues predominate over residues 1 to 14; the sequence is MSEYPKKRKRKTLH. 2 disordered regions span residues 1–23 and 54–82; these read MSEYPKKRKRKTLHPSRYSDSSG and DNKDDDSDPETANDLPKFTDGTKARSRSQ. Ser-60 is modified (phosphoserine). Lys-76 is covalently cross-linked (Glycyl lysine isopeptide (Lys-Gly) (interchain with G-Cter in SUMO2)). Ser-88 is subject to Phosphoserine. Residues Lys-177, Lys-181, and Lys-226 each participate in a glycyl lysine isopeptide (Lys-Gly) (interchain with G-Cter in SUMO2) cross-link. 8 consecutive C2H2-type zinc fingers follow at residues 204 to 227, 233 to 255, 260 to 283, 289 to 311, 374 to 397, 403 to 425, 431 to 454, and 460 to 482; these read YKCELCEFNSKYFSDLKQHVILKH, NVCRVCKESFSTNMLLIEHAKLH, YICKYCDYKTVIFENLSQHIADTH, YWCEQCDVQFSSSSELYLHFQEH, FVCQVCGFRSRLHTNVNRHVAIEH, HVCDDCGKGFSSMLEYCKHLNSH, YLCQYCEYSTGQIEDLKIHLDFKH, and HKCSDCLMRFGNERELISHLPVH. The tract at residues 371–455 is interaction with CTNNA2; that stretch reads KNFFVCQVCG…LKIHLDFKHS (85 aa).

The protein belongs to the krueppel C2H2-type zinc-finger protein family. As to quaternary structure, interacts with CTNNA2.

Its subcellular location is the nucleus. Its function is as follows. Binds DNA and may function as a transcriptional repressor. This chain is Zinc finger protein 639 (Znf639), found in Rattus norvegicus (Rat).